Consider the following 401-residue polypeptide: Enolase (401 aa).

Gln154 provides a ligand contact to (2R)-2-phosphoglycerate. Glu196 serves as the catalytic Proton donor. Positions 232, 275, and 302 each coordinate Mg(2+). Residues Lys327, Arg356, Ser357, and Lys378 each contribute to the (2R)-2-phosphoglycerate site. Catalysis depends on Lys327, which acts as the Proton acceptor.

The protein belongs to the enolase family. The cofactor is Mg(2+).

It localises to the cytoplasm. It is found in the secreted. The protein resides in the cell surface. The enzyme catalyses (2R)-2-phosphoglycerate = phosphoenolpyruvate + H2O. Its pathway is carbohydrate degradation; glycolysis; pyruvate from D-glyceraldehyde 3-phosphate: step 4/5. Catalyzes the reversible conversion of 2-phosphoglycerate (2-PG) into phosphoenolpyruvate (PEP). It is essential for the degradation of carbohydrates via glycolysis. The chain is Enolase from Haloarcula marismortui (strain ATCC 43049 / DSM 3752 / JCM 8966 / VKM B-1809) (Halobacterium marismortui).